Here is a 469-residue protein sequence, read N- to C-terminus: Glutamate--tRNA ligase (469 aa).

Positions 9 to 19 (PSPTGFLHVGG) match the 'HIGH' region motif. Zn(2+) is bound by residues Cys-98, Cys-100, Cys-125, and Asp-127. The 'KMSKS' region signature appears at 236 to 240 (KLSKR). Lys-239 provides a ligand contact to ATP.

The protein belongs to the class-I aminoacyl-tRNA synthetase family. Glutamate--tRNA ligase type 1 subfamily. Monomer. Requires Zn(2+) as cofactor.

It is found in the cytoplasm. It carries out the reaction tRNA(Glu) + L-glutamate + ATP = L-glutamyl-tRNA(Glu) + AMP + diphosphate. In terms of biological role, catalyzes the attachment of glutamate to tRNA(Glu) in a two-step reaction: glutamate is first activated by ATP to form Glu-AMP and then transferred to the acceptor end of tRNA(Glu). The protein is Glutamate--tRNA ligase of Shewanella loihica (strain ATCC BAA-1088 / PV-4).